We begin with the raw amino-acid sequence, 463 residues long: Glycine--tRNA ligase (463 aa).

Positions 98 and 174 each coordinate substrate. ATP is bound by residues 206 to 208 (RNE), 216 to 221 (FRTREF), 290 to 291 (EL), and 334 to 337 (GADR). Residue 221–225 (FEQME) coordinates substrate. 330 to 334 (EPSLG) is a substrate binding site.

Belongs to the class-II aminoacyl-tRNA synthetase family. Homodimer.

The protein resides in the cytoplasm. The catalysed reaction is tRNA(Gly) + glycine + ATP = glycyl-tRNA(Gly) + AMP + diphosphate. Its function is as follows. Catalyzes the attachment of glycine to tRNA(Gly). This Staphylococcus aureus (strain Mu50 / ATCC 700699) protein is Glycine--tRNA ligase.